The following is a 545-amino-acid chain: Squalene monooxygenase SE2 (545 aa).

Residues 12-32 (EYFLMFAATLLFGFVLYLFTL) form a helical membrane-spanning segment. Residues 86 to 87 (VA), 106 to 107 (ER), R114, R185, V201, D364, and M377 each bind FAD. The next 2 helical transmembrane spans lie at 475-495 (LFFH…IPFP) and 500-520 (MWLG…IIKS).

This sequence belongs to the squalene monooxygenase family. FAD is required as a cofactor. As to expression, weak expression in petioles and flower buds and barely detectable in roots and leaves. In petioles, preferentially observed in vascular bundle tissue (phloem cells and parenchymatous cells near xylem) and resin ducts.

The protein resides in the membrane. The enzyme catalyses squalene + reduced [NADPH--hemoprotein reductase] + O2 = (S)-2,3-epoxysqualene + oxidized [NADPH--hemoprotein reductase] + H2O + H(+). It functions in the pathway terpene metabolism; lanosterol biosynthesis; lanosterol from farnesyl diphosphate: step 2/3. Its function is as follows. Component of the triterpene saponins (e.g. ginsenosides or panaxosides) and phytosterols biosynthetic pathways. Catalyzes the first oxygenation step in sterol biosynthesis and is suggested to be one of the rate-limiting enzymes in this pathway. The sequence is that of Squalene monooxygenase SE2 from Panax ginseng (Korean ginseng).